The chain runs to 226 residues: Glutathione peroxidase 3 (226 aa).

The signal sequence occupies residues 1–24; that stretch reads MARLLQASCLLSLLLAGFVPQSRG. Selenocysteine 73 is an active-site residue. Residue selenocysteine 73 is a non-standard amino acid, selenocysteine.

The protein belongs to the glutathione peroxidase family. As to quaternary structure, homotetramer. As to expression, secreted in plasma.

The protein localises to the secreted. It catalyses the reaction 2 glutathione + H2O2 = glutathione disulfide + 2 H2O. The enzyme catalyses tert-butyl hydroperoxide + 2 glutathione = tert-butanol + glutathione disulfide + H2O. Protects cells and enzymes from oxidative damage, by catalyzing the reduction of hydrogen peroxide, lipid peroxides and organic hydroperoxide, by glutathione. This chain is Glutathione peroxidase 3, found in Hylobates lar (Lar gibbon).